The sequence spans 781 residues: Toll-like receptor 2 type-2 (781 aa).

A signal peptide spans 1–24 (MHTWKMWAICTALAAHLPEEQALR). At 25 to 585 (QACLSCDATQ…QLSLMECHRS (561 aa)) the chain is on the extracellular side. An intrachain disulfide couples Cys30 to Cys36. Residue Asn37 is glycosylated (N-linked (GlcNAc...) asparagine). 6 LRR repeats span residues 53–74 (KITV…DLQK), 77–98 (NLRT…SFGS), 101–122 (KLEL…WFGP), 125–146 (SLQH…SPFS), 150–171 (NLSS…NFEG), and 174–195 (FLNT…SLKS). Asn109 carries an N-linked (GlcNAc...) asparagine glycan. 4 N-linked (GlcNAc...) asparagine glycosylation sites follow: Asn150, Asn184, Asn301, and Asn313. The cysteines at positions 350 and 379 are disulfide-linked. 7 LRR repeats span residues 358 to 378 (SLEY…EHSA), 385 to 406 (SLQT…GKSL), 411 to 432 (NLNL…CEWP), 434 to 455 (NLKY…IPST), 456 to 474 (LEVL…LQLP), 475 to 496 (FLKE…TDIP), and 497 to 518 (NLVA…EFES). Asn390 carries N-linked (GlcNAc...) asparagine glycosylation. Residues Cys429 and Cys451 are joined by a disulfide bond. Asn439 carries N-linked (GlcNAc...) asparagine glycosylation. An LRRCT domain is found at 530–584 (NNFICSCEFLSFIHHEAGIAQVLVGWPESYICDSPLTVRGAQVGSVQLSLMECHR). A helical transmembrane segment spans residues 586-606 (LLVSLICTLVFLFILILVVVG). Residues 607–781 (YKYHAVWYMR…WENLKAALKS (175 aa)) lie on the Cytoplasmic side of the membrane. The TIR domain maps to 636–779 (ICYDAFVSYS…MFWENLKAAL (144 aa)).

It belongs to the Toll-like receptor family. As to quaternary structure, binds MYD88 (via TIR domain). Post-translationally, N-glycosylated. As to expression, highly expressed in ovary. Also detected in brain, heart, lung, liver, spleen and kidney, and at low levels in gizzard, muscle, testis and proventriculus.

It localises to the membrane. Functionally, participates in the innate immune response to microbial agents. Acts via MYD88 and TRAF6, leading to NF-kappa-B activation, cytokine secretion and the inflammatory response. Mediates the response to mycoplasmal macrophage-activating lipopeptide-2kD (MALP-2). The protein is Toll-like receptor 2 type-2 (TLR2-2) of Gallus gallus (Chicken).